The primary structure comprises 235 residues: Secretory carrier-associated membrane protein 5 (235 aa).

Residues 1 to 39 (MAEKVNNFPPLPKFIPLKPCFYQDFEADIPPQHVSMTKR) lie on the Cytoplasmic side of the membrane. Residues 40–60 (LYYLWMLNSVTLAVNLVGCLA) traverse the membrane as a helical segment. Topologically, residues 61 to 67 (WLIGGGG) are extracellular. A helical membrane pass occupies residues 68–88 (ATNFGLAFLWLILFTPCSYVC). The Cytoplasmic portion of the chain corresponds to 89–102 (WFRPIYKAFKTDSS). The chain crosses the membrane as a helical span at residues 103–125 (FSFMAFFFTFMAQLVISIIQAVG). The Extracellular segment spans residues 126–148 (IPGWGVCGWIATISFFGTNIGSA). A helical transmembrane segment spans residues 149–169 (VVMLIPTVMFTVMAVFSFIAL). Residues 170 to 235 (SMVHKFYRGS…TPNYTYSNEM (66 aa)) lie on the Cytoplasmic side of the membrane.

The protein belongs to the SCAMP family. SCAMP5 subfamily. Interacts (via C-terminal part) with SYT1 and SYT2; interaction with synaptotagmins making a link with the SNARE molecules. Interacts with SLC9A7. In terms of tissue distribution, expressed both by neuronal and non-neuronal tissues. Expressed in brain, stomach, thyroid, spinal cord, lymph node, trachea, adrenal gland, bone marrow and in the different parts of brain. In thyroid tissues, it is expressed by the follicular epithelial cells. In the adrenal gland tissues it is detected in the zona fasciculata of the cortex region (at protein level).

The protein localises to the cell membrane. Its subcellular location is the golgi apparatus membrane. It is found in the golgi apparatus. The protein resides in the trans-Golgi network membrane. It localises to the recycling endosome membrane. The protein localises to the cytoplasmic vesicle. Its subcellular location is the secretory vesicle. It is found in the synaptic vesicle membrane. In terms of biological role, required for the calcium-dependent exocytosis of signal sequence-containing cytokines such as CCL5. Probably acts in cooperation with the SNARE machinery. May play a role in accumulation of expanded polyglutamine (polyQ) protein huntingtin (HTT) in case of endoplasmic reticulum stress by inhibiting the endocytosis pathway. The sequence is that of Secretory carrier-associated membrane protein 5 (SCAMP5) from Homo sapiens (Human).